The primary structure comprises 1233 residues: Structural maintenance of chromosomes protein 1A (1233 aa).

Residue 32 to 39 (GPNGSGKS) coordinates ATP. Coiled coils occupy residues 104 to 124 (EYKINNKVVQLHEYSEELEKL) and 163 to 503 (ELAQ…KAEI). Residues 284 to 293 (IKEKDSELNQ) show a composition bias toward basic and acidic residues. 2 disordered regions span residues 284–308 (IKEKDSELNQKRPQYIKAKENTSHK) and 348–369 (QEFEERMEEESQSQGRDLTLEE). Phosphoserine occurs at positions 358 and 360. An SMC hinge domain is found at 515–629 (VYGRLIDLCQ…DNVEDARRIA (115 aa)). 2 positions are modified to N6-acetyllysine: lysine 648 and lysine 713. Residues 660–935 (KAKARRWDEK…RHNLLQACKM (276 aa)) adopt a coiled-coil conformation. The interval 947-966 (MDDISQEEGSSQGEDSVSGS) is disordered. Residues 953–966 (EEGSSQGEDSVSGS) are compositionally biased toward low complexity. At serine 957 the chain carries Phosphoserine; by ATM. A Phosphoserine modification is found at serine 962. The residue at position 966 (serine 966) is a Phosphoserine; by ATM and ATR. Serine 970 bears the Phosphoserine mark. Positions 991–1068 (KDAQAEEEIK…FEQIKKERFD (78 aa)) form a coiled coil. Lysine 1037 carries the N6-acetyllysine modification.

This sequence belongs to the SMC family. SMC1 subfamily. As to quaternary structure, forms a heterodimer with SMC3 in cohesin complexes. Cohesin complexes are composed of the SMC1 (SMC1A or SMC1B) and SMC3 heterodimer attached via their SMC hinge domain, RAD21 which link them, and one STAG protein (STAG1, STAG2 or STAG3), which interacts with RAD21. In germ cell cohesin complexes, SMC1A is mutually exclusive with SMC1B. Interacts with BRCA1. Found in a complex with CDCA5, SMC3 and RAD21, PDS5A/SCC-112 and PDS5B/APRIN. Interacts with NDC80. Interacts with BRAT1. Found in a complex containing POLE and SMC3. Interacts with RPGR, STAG3 and SYCP2. The cohesin complex interacts with the cohesin loading complex subunits NIPBL/Scc2 (via HEAT repeats) and MAU2/Scc4. NIPBL directly contacts all members of the complex, RAD21, SMC1A/B, SMC3 and STAG1. In terms of processing, ubiquitinated by the DCX(DCAF15) complex, leading to its degradation. Post-translationally, phosphorylated by ATM upon ionizing radiation in a NBS1-dependent manner. Phosphorylated by ATR upon DNA methylation in a MSH2/MSH6-dependent manner. Phosphorylation of Ser-957 and Ser-966 activates it and is required for S-phase checkpoint activation.

The protein localises to the nucleus. It is found in the chromosome. The protein resides in the centromere. It localises to the kinetochore. In terms of biological role, involved in chromosome cohesion during cell cycle and in DNA repair. Central component of cohesin complex. The cohesin complex is required for the cohesion of sister chromatids after DNA replication. The cohesin complex apparently forms a large proteinaceous ring within which sister chromatids can be trapped. At anaphase, the complex is cleaved and dissociates from chromatin, allowing sister chromatids to segregate. The cohesin complex may also play a role in spindle pole assembly during mitosis. Involved in DNA repair via its interaction with BRCA1 and its related phosphorylation by ATM, or via its phosphorylation by ATR. Works as a downstream effector both in the ATM/NBS1 branch and in the ATR/MSH2 branch of S-phase checkpoint. This Homo sapiens (Human) protein is Structural maintenance of chromosomes protein 1A (SMC1A).